Reading from the N-terminus, the 275-residue chain is Pantothenate synthetase (275 aa).

Residue 26-33 participates in ATP binding; it reads MGFLHEGH. His33 acts as the Proton donor in catalysis. Gln57 provides a ligand contact to (R)-pantoate. Residue Gln57 participates in beta-alanine binding. Position 143 to 146 (143 to 146) interacts with ATP; it reads GQKD. Gln149 is a binding site for (R)-pantoate. ATP is bound by residues Ala172 and 180–183; that span reads RSSR.

This sequence belongs to the pantothenate synthetase family. Homodimer.

Its subcellular location is the cytoplasm. The catalysed reaction is (R)-pantoate + beta-alanine + ATP = (R)-pantothenate + AMP + diphosphate + H(+). The protein operates within cofactor biosynthesis; (R)-pantothenate biosynthesis; (R)-pantothenate from (R)-pantoate and beta-alanine: step 1/1. Functionally, catalyzes the condensation of pantoate with beta-alanine in an ATP-dependent reaction via a pantoyl-adenylate intermediate. The polypeptide is Pantothenate synthetase (Gluconobacter oxydans (strain 621H) (Gluconobacter suboxydans)).